A 1342-amino-acid chain; its full sequence is MEENEVESSSDAAPGPGRPEEPSESGLGVGTSEAVSADSSDAAAAPGQAEADDSGVGQSSDRGSRSQEEVSESSSSADPLPNSYLPDSSSVSHGPVAGVTGGPPALVHSSALPDPNMLVSDCTASSSDLGSAIDKIIESTIGPDLIQNCITVTSAEDGGAETTRYLILQGPDDGAPMTSPMSSSTLAHSLAAIEALADGPTSTSTCLEAQGGPSSPVQLPPASGAEEPDLQSLEAMMEVVVVQQFKCKMCQYRSSTKATLLRHMRERHFRPVAAAAAAAGKKGRLRKWSTSTKSQEEEGPEEEDDDDIVDAGAIDDLEEDSDYNPAEDEPRGRQLRLQRPTPSTPRPRRRPGRPRKLPRLEISDLPDGVEGEPLVSSQSGQSPPEPQDPEAPSSSGPGHLVAMGKVSRTPVEAGVSQSDAENAAPSCPDEHDTLPRRRGRPSRRFLGKKYRKYYYKSPKPLLRPFLCRICGSRFLSHEDLRFHVNSHEAGDPQLFKCLQCSYRSRRWSSLKEHMFNHVGSKPYKCDECSYTSVYRKDVIRHAAVHSRDRKKRPDPTPKLSSFPCPVCGRVYPMQKRLTQHMKTHSTEKPHMCDKCGKSFKKRYTFKMHLLTHIQAVANRRFKCEFCEFVCEDKKALLNHQLSHVSDKPFKCSFCPYRTFREDFLLSHVAVKHTGAKPFACEYCHFSTRHKKNLRLHVRCRHASSFEEWGRRHPEEPPSRRRPFFSLQQIEELKQQHSAAPGPPPSSPGPPEIPPEATTFQSSEAPSLLCSDTLGGATIIYQQGAEESTAMATQTALDLLLNMSAQRELGGTALQVAVVKSEDVEAGLASPGGQPSPEGATPQVVTLHVAEPGGGAAAESQLGPPDLPQITLAPGPFGGTGYSVITAPPMEEGTSAPGTPYSEEPAGEAAQAVVVSDTLKEAGTHYIMATDGTQLHHIELTADGSISFPSPDALASGAKWPLLQCGGLPRDGPEPPSPAKTHCVGDSQSSASSPPATSKALGLAVPPSPPSAATAASKKFSCKICAEAFPGRAEMESHKRAHAGPGAFKCPDCPFSARQWPEVRAHMAQHSSLRPHQCSQCSFASKNKKDLRRHMLTHTKEKPFACHLCGQRFNRNGHLKFHIQRLHSPDGRKSGTPTARAPTQTPTQTIILNSDDETLATLHTALQSSHGVLGPERLQQALSQEHIIVAQEQTVTNQEEAAYIQEITTADGQTVQHLVTSDNQVQYIISQDGVQHLLPQEYVVVPEGHHIQVQEGQITHIQYEQGAPFLQESQIQYVPVSPGQQLVTQAQLEAAAHSAVTAVADAAMAQAQGLFGTDETVPEHIQQLQHQGIEYDVITLADD.

Disordered stretches follow at residues methionine 1–glycine 102 and threonine 201–proline 228. A compositionally biased stretch (low complexity) spans alanine 34–alanine 49. The span at threonine 201–valine 217 shows a compositional bias: polar residues. The segment at phenylalanine 245–histidine 268 adopts a C2H2-type 1 zinc-finger fold. The segment at alanine 274–serine 442 is disordered. Residues glutamate 297–glutamate 327 show a composition bias toward acidic residues. The span at arginine 346 to leucine 357 shows a compositional bias: basic residues. 8 consecutive C2H2-type zinc fingers follow at residues phenylalanine 465 to histidine 487, phenylalanine 495 to histidine 517, tyrosine 523 to histidine 545, phenylalanine 562 to histidine 584, histidine 590 to histidine 612, phenylalanine 621 to histidine 643, phenylalanine 649 to histidine 672, and phenylalanine 678 to histidine 701. Disordered regions lie at residues leucine 732–glutamate 763 and cysteine 964–threonine 1013. Positions proline 740–proline 753 are enriched in pro residues. Phosphoserine is present on residues serine 976, serine 992, and serine 1007. The segment covering serine 986–serine 997 has biased composition (low complexity). C2H2-type zinc fingers lie at residues phenylalanine 1019 to histidine 1041, phenylalanine 1047 to histidine 1069, histidine 1075 to histidine 1097, and phenylalanine 1103 to histidine 1126. Lysine 1022 is covalently cross-linked (Glycyl lysine isopeptide (Lys-Gly) (interchain with G-Cter in SUMO2)). The tract at residues histidine 1041–aspartate 1342 is involved in the interaction with CCAR2. Serine 1153 is modified (phosphoserine).

It belongs to the krueppel C2H2-type zinc-finger protein family. In terms of assembly, interacts with NCOA6; may enhance ligand-dependent transcriptional activation by nuclear hormone receptors. Interacts with CNOT6. Interacts with CNOT9; the interaction is direct. Component of a nuclear receptor-mediated transcription complex composed of at least ZNF335, CCAR2 and EMSY; the complex stimulates the transcription of nuclear receptor target genes such as SOX9 and HOXA1. Within the complex interacts with EMSY and interacts (via C-terminus) with CCAR2. Interacts with members of histone H3'Lys4'(H3K4) methyltransferase complexes ASH2L, CXXC1, KMT2A/MLL1, RBBP5, SETD1A and WDR5. Component of a histone methylation complex composed of at least ZNF335, RBBP5, ASH2L and WDR5; the complex may have histone H3-specific methyltransferase activity, however does not have specificity for 'Lys-4' of histone H3. Interacts with RBBP5 and WDR5. Interacts with ASHL2. Components of this complex may associate with components of the ZNF335-CCAR2-EMSY nuclear receptor-mediated transcription complex to form a complex at least composed of ZNF335, HCFC1, CCAR2, EMSY, MKI67, RBBP5, ASH2L and WDR5. Within this complex also interacts with HCFC1 and MKI67. As to expression, ubiquitously expressed.

The protein resides in the nucleus. Functionally, component or associated component of some histone methyltransferase complexes may regulate transcription through recruitment of those complexes on gene promoters. Enhances ligand-dependent transcriptional activation by nuclear hormone receptors. Plays an important role in neural progenitor cell proliferation and self-renewal through the regulation of specific genes involved brain development, including REST. Also controls the expression of genes involved in somatic development and regulates, for instance, lymphoblast proliferation. In Homo sapiens (Human), this protein is Zinc finger protein 335 (ZNF335).